A 130-amino-acid chain; its full sequence is Large ribosomal subunit protein bL31c (130 aa).

The N-terminal 36 residues, 1 to 36 (MVLTLSNQFLAKIPATPKTLTLPKTSSSTLRPQWSC), are a transit peptide targeting the chloroplast.

The protein belongs to the bacterial ribosomal protein bL31 family. Type A subfamily. As to quaternary structure, component of the chloroplast large ribosomal subunit (LSU). Mature 70S chloroplast ribosomes of higher plants consist of a small (30S) and a large (50S) subunit. The 30S small subunit contains 1 molecule of ribosomal RNA (16S rRNA) and 24 different proteins. The 50S large subunit contains 3 rRNA molecules (23S, 5S and 4.5S rRNA) and 33 different proteins.

The protein localises to the plastid. The protein resides in the chloroplast. Component of the chloroplast ribosome (chloro-ribosome), a dedicated translation machinery responsible for the synthesis of chloroplast genome-encoded proteins, including proteins of the transcription and translation machinery and components of the photosynthetic apparatus. The polypeptide is Large ribosomal subunit protein bL31c (RPL31) (Spinacia oleracea (Spinach)).